The following is a 662-amino-acid chain: Primary amine oxidase 2 (662 aa).

Positions 1 to 22 are cleaved as a signal peptide; sequence MSQLLLFTILVFSSVFVIGSLS. A glycan (N-linked (GlcNAc...) asparagine) is linked at Asn154. 321–332 is a substrate binding site; that stretch reads FFDCGEFGCGQY. Asp323 (proton acceptor) is an active-site residue. Residues Cys342 and Cys368 are joined by a disulfide bond. Residue 405 to 410 participates in substrate binding; that stretch reads VGNYDY. Tyr408 functions as the Schiff-base intermediate with substrate; via topaquinone in the catalytic mechanism. Tyr408 carries the post-translational modification 2',4',5'-topaquinone. Cu cation is bound by residues His464 and His466. Asp473 and Asp475 together coordinate Mn(2+). Asn568 is a glycosylation site (N-linked (GlcNAc...) asparagine). 2 residues coordinate Mn(2+): Asp602 and Ile603. His613 contacts Cu cation.

It belongs to the copper/topaquinone oxidase family. Homodimer. The cofactor is Cu cation. Mn(2+) serves as cofactor. It depends on L-topaquinone as a cofactor. Topaquinone (TPQ) is generated by copper-dependent autoxidation of a specific tyrosyl residue.

The catalysed reaction is a primary methyl amine + O2 + H2O = an aldehyde + H2O2 + NH4(+). This chain is Primary amine oxidase 2, found in Arabidopsis thaliana (Mouse-ear cress).